The primary structure comprises 260 residues: Vesicle-associated membrane protein/synaptobrevin-binding protein (260 aa).

The Cytoplasmic segment spans residues 1–238; sequence MASHEQALIL…SPAPAAAVRA (238 aa). The region spanning 7–125 is the MSP domain; sequence ALILEPAGEL…MDTKLRCVFE (119 aa). Positions 127–177 are disordered; it reads PDGSHQAPASDASRATDAGAHFSESALEDPTVASRKTETQSPKRVGAVGSA. Residues 172–216 adopt a coiled-coil conformation; the sequence is GAVGSAGEDVKKLQHELKKAQSEITSLKGENSQLKDEGIRLRKVA. A helical; Anchor for type IV membrane protein transmembrane segment spans residues 239-259; that stretch reads FPPVVYVVAAIILGLIIGKFL.

This sequence belongs to the VAMP-associated protein (VAP) (TC 9.B.17) family. As to expression, detected only in the central nervous system and the gill of aplysia.

It is found in the membrane. The protein localises to the synapse. The protein resides in the synaptosome. Functionally, required for neurotransmitter release. Interacts with VAMP. The sequence is that of Vesicle-associated membrane protein/synaptobrevin-binding protein from Aplysia californica (California sea hare).